Here is a 464-residue protein sequence, read N- to C-terminus: Properdin (464 aa).

Residues 1–22 (MPAEMQAPQWLLLLLVILPATG) form the signal peptide. TSP type-1 domains lie at 24–72 (DPVL…QACR), 73–130 (SPQW…PCCP), 132–187 (MGGW…KTCP), 189–251 (HGAW…PPCP), 253–309 (AGGW…VPCP), 311–372 (NGEW…HNCI), and 374–457 (KGSW…PVCK). Cystine bridges form between Cys28–Cys52, Cys39–Cys68, and Cys53–Cys71. C-linked (Man) tryptophan glycosylation is found at Trp79 and Trp82. Cystine bridges form between Cys85-Cys123, Cys89-Cys129, Cys100-Cys107, Cys128-Cys166, Cys144-Cys180, Cys148-Cys186, and Cys159-Cys170. C-linked (Man) tryptophan glycosylation is found at Trp135, Trp138, and Trp141. Thr147 carries O-linked (Fuc...) threonine glycosylation. Trp192, Trp195, and Trp198 each carry a C-linked (Man) tryptophan glycan. Cystine bridges form between Cys201–Cys244, Cys205–Cys250, and Cys220–Cys234. A glycan (O-linked (Fuc...) serine) is linked at Ser204. Trp256 and Trp259 each carry a C-linked (Man) tryptophan glycan. 3 cysteine pairs are disulfide-bonded: Cys265–Cys302, Cys269–Cys308, and Cys280–Cys292. An O-linked (Fuc...) threonine glycan is attached at Thr268. 2 C-linked (Man) tryptophan glycosylation sites follow: Trp317 and Trp320. Cystine bridges form between Cys323/Cys365, Cys332/Cys371, and Cys345/Cys355. Residues 346-354 (GGRKFNGKP) are interaction with Complement C3 beta chain. C-linked (Man) tryptophan glycosylation is found at Trp377, Trp380, and Trp383. 3 disulfide bridges follow: Cys386–Cys450, Cys390–Cys456, and Cys402–Cys434. Asn423 is a glycosylation site (N-linked (GlcNAc...) asparagine).

In plasma, properdin exists as dimers, trimers or tetramers in the relative proportions of 26:54:20. Interacts with the pro-C3-convertase enzyme complex (C3b-Bb) comprised of Complement C3 beta chain (C3b) and the Complement factor B Bb fragment (Bb), where it binds (via its TSP type-1 5 domain) with C3b and Bb. This interaction stabilizes the complex and allows it to become the active C3-convertase enzyme complex (C3b-Bb-FP). Interacts with C3b. Interacts with CFB.

It localises to the secreted. A positive regulator of the alternate pathway of complement. It binds to and stabilizes the C3- and C5-convertase enzyme complexes. Inhibits CFI-CFH mediated degradation of Inhibits CFI-CFH mediated degradation of Complement C3 beta chain (C3b). The sequence is that of Properdin (Cfp) from Mus musculus (Mouse).